The following is a 35-amino-acid chain: Thionin NsW2 (35 aa).

Intrachain disulfides connect cysteine 4–cysteine 32, cysteine 12–cysteine 30, and cysteine 16–cysteine 26.

Contains 4 disulfide bonds.

Its subcellular location is the secreted. In terms of biological role, antimicrobial peptide disrupting membranes. Has antibacterial against Gram-positive bacteria S.aureus (MIC=6.5 uM) and B.subtilis (MIC=3.25 uM) but not against Gram-negative bacterium E.coli. Has antifungal activity against C.albicans (MIC=3.25 uM). The polypeptide is Thionin NsW2 (Nigella sativa (Black cumin)).